Consider the following 100-residue polypeptide: Large ribosomal subunit protein uL23 (100 aa).

This sequence belongs to the universal ribosomal protein uL23 family. In terms of assembly, part of the 50S ribosomal subunit. Contacts protein L29, and trigger factor when it is bound to the ribosome.

In terms of biological role, one of the early assembly proteins it binds 23S rRNA. One of the proteins that surrounds the polypeptide exit tunnel on the outside of the ribosome. Forms the main docking site for trigger factor binding to the ribosome. This chain is Large ribosomal subunit protein uL23, found in Yersinia enterocolitica serotype O:8 / biotype 1B (strain NCTC 13174 / 8081).